The following is a 145-amino-acid chain: Ribonuclease H (145 aa).

The 141-residue stretch at 1 to 141 folds into the RNase H type-1 domain; the sequence is MQEVTIYSDG…ADALANRGVA (141 aa). Asp-9, Glu-47, Asp-69, and Asp-133 together coordinate Mg(2+).

This sequence belongs to the RNase H family. In terms of assembly, monomer. It depends on Mg(2+) as a cofactor.

The protein localises to the cytoplasm. It catalyses the reaction Endonucleolytic cleavage to 5'-phosphomonoester.. Endonuclease that specifically degrades the RNA of RNA-DNA hybrids. In Cupriavidus metallidurans (strain ATCC 43123 / DSM 2839 / NBRC 102507 / CH34) (Ralstonia metallidurans), this protein is Ribonuclease H.